Reading from the N-terminus, the 544-residue chain is Terpene synthase 9 (544 aa).

3 residues coordinate Mg(2+): D296, D300, and E449. The DDXXD motif motif lies at 296–300; it reads DDTFD.

The protein belongs to the terpene synthase family. Tpsa subfamily. It depends on Mg(2+) as a cofactor. Mn(2+) serves as cofactor.

The enzyme catalyses (2E,6E)-farnesyl diphosphate = (1E,4E)-germacrene B + diphosphate. It carries out the reaction (2E)-geranyl diphosphate = terpinolene + diphosphate. The catalysed reaction is (2E)-geranyl diphosphate = limonene + diphosphate. It catalyses the reaction (2E)-geranyl diphosphate = beta-myrcene + diphosphate. The enzyme catalyses (2Z,6Z)-farnesyl diphosphate = germacrene A + diphosphate. It carries out the reaction (2Z,6Z)-farnesyl diphosphate = alpha-humulene + diphosphate. The protein operates within secondary metabolite biosynthesis; terpenoid biosynthesis. Its function is as follows. Sesquiterpene synthase involved in the biosynthesis of volatile compounds. Mediates the conversion of (2E,6E)-farnesyl diphosphate (FPP) into (1E,4E)-germacrene B, but also smaller amounts of germacrene A and C, and of (2Z,6Z)-farnesyl diphosphate ((ZZ)-FPP) into alpha-humulene, germacrene A and germacrene B. Can act with a low efficiency as a monoterpene synthase with geranyl diphosphate (GPP) as substrate, thus producing beta-myrcene, limonene and terpinolene. The polypeptide is Terpene synthase 9 (Solanum habrochaites (Wild tomato)).